Consider the following 122-residue polypeptide: Large ribosomal subunit protein uL14c (122 aa).

Belongs to the universal ribosomal protein uL14 family. Part of the 50S ribosomal subunit.

It is found in the plastid. Its function is as follows. Binds to 23S rRNA. The protein is Large ribosomal subunit protein uL14c of Cuscuta obtusiflora (Peruvian dodder).